A 186-amino-acid chain; its full sequence is Cell division protein ZapC (186 aa).

It belongs to the ZapC family. In terms of assembly, interacts directly with FtsZ.

The protein localises to the cytoplasm. In terms of biological role, contributes to the efficiency of the cell division process by stabilizing the polymeric form of the cell division protein FtsZ. Acts by promoting interactions between FtsZ protofilaments and suppressing the GTPase activity of FtsZ. The protein is Cell division protein ZapC of Musicola paradisiaca (strain Ech703) (Dickeya paradisiaca).